Consider the following 577-residue polypeptide: Phosphoenolpyruvate-protein phosphotransferase (577 aa).

His191 serves as the catalytic Tele-phosphohistidine intermediate. Residues Arg298 and Arg334 each coordinate phosphoenolpyruvate. 2 residues coordinate Mg(2+): Glu435 and Asp459. Residues 458–459 (ND) and Arg469 contribute to the phosphoenolpyruvate site. Cys506 functions as the Proton donor in the catalytic mechanism.

The protein belongs to the PEP-utilizing enzyme family. In terms of assembly, homodimer. Mg(2+) serves as cofactor.

It is found in the cytoplasm. The enzyme catalyses L-histidyl-[protein] + phosphoenolpyruvate = N(pros)-phospho-L-histidyl-[protein] + pyruvate. In terms of biological role, general (non sugar-specific) component of the phosphoenolpyruvate-dependent sugar phosphotransferase system (sugar PTS). This major carbohydrate active-transport system catalyzes the phosphorylation of incoming sugar substrates concomitantly with their translocation across the cell membrane. Enzyme I transfers the phosphoryl group from phosphoenolpyruvate (PEP) to the phosphoryl carrier protein (HPr). This chain is Phosphoenolpyruvate-protein phosphotransferase (ptsI), found in Streptococcus equinus (Streptococcus bovis).